Reading from the N-terminus, the 526-residue chain is Na(+)/H(+) antiporter NhaB (526 aa).

10 consecutive transmembrane segments (helical) span residues 13 to 33 (FLGQSPDWYKLAILVFLVVNP), 98 to 118 (LLLIFMVAGIYFMKQLLLFVF), 133 to 155 (LAFCFAAALLSAFLDALTVVAVV), 208 to 228 (LLMHAGVGTALGGVMTMVGEP), 244 to 264 (FFLRMAPVTLPVFACGLLVCL), 309 to 329 (ALIGIWLVVALAFHLAEVGLI), 355 to 375 (EALPFTALLTVFFTVVAVIIE), 395 to 415 (LALFYLFNGLLSSVSDNVFVG), 452 to 472 (VATPNGQAAFLFLLTSALAPL), and 481 to 501 (VWMALPYTVVLTLVGLLCVQF).

The protein belongs to the NhaB Na(+)/H(+) (TC 2.A.34) antiporter family.

The protein resides in the cell inner membrane. It catalyses the reaction 2 Na(+)(in) + 3 H(+)(out) = 2 Na(+)(out) + 3 H(+)(in). Its function is as follows. Na(+)/H(+) antiporter that extrudes sodium in exchange for external protons. The sequence is that of Na(+)/H(+) antiporter NhaB from Serratia proteamaculans (strain 568).